Reading from the N-terminus, the 86-residue chain is MEQKRGMRKTRIGVVVSDKMDKTVVVAVETLVQHPLYKKTIKRTTKFKAHDENNECRVGDKVLIMETRPLSKEKRWRVVQILERAK.

The protein belongs to the universal ribosomal protein uS17 family. In terms of assembly, part of the 30S ribosomal subunit.

Functionally, one of the primary rRNA binding proteins, it binds specifically to the 5'-end of 16S ribosomal RNA. This Caldicellulosiruptor saccharolyticus (strain ATCC 43494 / DSM 8903 / Tp8T 6331) protein is Small ribosomal subunit protein uS17.